Here is a 483-residue protein sequence, read N- to C-terminus: Probable glycosyltransferase 6 (483 aa).

The Cytoplasmic segment spans residues Met1–Ala40. Residues Leu41–Leu61 form a helical; Signal-anchor for type II membrane protein membrane-spanning segment. Residues Ser62–Arg483 are Lumenal-facing. An N-linked (GlcNAc...) asparagine glycan is attached at Asn144.

The protein belongs to the glycosyltransferase 34 family.

The protein resides in the golgi apparatus membrane. Probable glycosyltransferase that may be involved in the biosynthesis of xyloglucan. The sequence is that of Probable glycosyltransferase 6 from Oryza sativa subsp. indica (Rice).